We begin with the raw amino-acid sequence, 172 residues long: ATP synthase subunit b, chloroplastic (172 aa).

The helical transmembrane segment at I15–V37 threads the bilayer.

Belongs to the ATPase B chain family. F-type ATPases have 2 components, F(1) - the catalytic core - and F(0) - the membrane proton channel. F(1) has five subunits: alpha(3), beta(3), gamma(1), delta(1), epsilon(1). F(0) has four main subunits: a(1), b(1), b'(1) and c(10-14). The alpha and beta chains form an alternating ring which encloses part of the gamma chain. F(1) is attached to F(0) by a central stalk formed by the gamma and epsilon chains, while a peripheral stalk is formed by the delta, b and b' chains.

Its subcellular location is the plastid. It localises to the chloroplast thylakoid membrane. Functionally, f(1)F(0) ATP synthase produces ATP from ADP in the presence of a proton or sodium gradient. F-type ATPases consist of two structural domains, F(1) containing the extramembraneous catalytic core and F(0) containing the membrane proton channel, linked together by a central stalk and a peripheral stalk. During catalysis, ATP synthesis in the catalytic domain of F(1) is coupled via a rotary mechanism of the central stalk subunits to proton translocation. Component of the F(0) channel, it forms part of the peripheral stalk, linking F(1) to F(0). The protein is ATP synthase subunit b, chloroplastic of Pisum sativum (Garden pea).